Reading from the N-terminus, the 330-residue chain is Polyprenyl transferase ausN (330 aa).

Helical transmembrane passes span 116-136 (AATI…LFLP), 165-185 (LILI…GMEP), 189-209 (ILSM…IDLV), 238-258 (AYSL…LGGL), and 260-280 (VPFV…FLRA).

The protein belongs to the UbiA prenyltransferase family. Mg(2+) serves as cofactor.

It localises to the membrane. The enzyme catalyses 3,5-dimethylorsellinate + (2E,6E)-farnesyl diphosphate = (3R)-3-farnesyl-6-hydroxy-2,3,5-trimethyl-4-oxocyclohexa-1,5-diene-1-carboxylate + diphosphate + H(+). Its pathway is secondary metabolite biosynthesis; terpenoid biosynthesis. Functionally, polyprenyl transferase; part of the gene cluster B that mediates the biosynthesis of austinol and dehydroaustinol, two fungal meroterpenoids. The first step of the pathway is the synthesis of 3,5-dimethylorsellinic acid by the polyketide synthase ausA. 3,5-dimethylorsellinic acid is then prenylated by the polyprenyl transferase ausN. Further epoxidation by the FAD-dependent monooxygenase ausM and cyclization by the probable terpene cyclase ausL lead to the formation of protoaustinoid A. Protoaustinoid A is then oxidized to spiro-lactone preaustinoid A3 by the combined action of the FAD-binding monooxygenases ausB and ausC, and the dioxygenase ausE. Acid-catalyzed keto-rearrangement and ring contraction of the tetraketide portion of preaustinoid A3 by ausJ lead to the formation of preaustinoid A4. The aldo-keto reductase ausK, with the help of ausH, is involved in the next step by transforming preaustinoid A4 into isoaustinone which is in turn hydroxylated by the P450 monooxygenase ausI to form austinolide. Finally, the cytochrome P450 monooxygenase ausG modifies austinolide to austinol. Austinol can be further modified to dehydroaustinol which forms a diffusible complex with diorcinol that initiates conidiation. Due to genetic rearrangements of the clusters and the subsequent loss of some enzymes, the end products of the Emericella nidulans austinoid biosynthesis clusters are austinol and dehydroaustinol, even if additional enzymes, such as the O-acetyltransferase ausQ and the cytochrome P450 monooxygenase ausR are still functional. This is Polyprenyl transferase ausN from Emericella nidulans (strain FGSC A4 / ATCC 38163 / CBS 112.46 / NRRL 194 / M139) (Aspergillus nidulans).